Reading from the N-terminus, the 211-residue chain is Large ribosomal subunit protein bL25 (211 aa).

The tract at residues 188–211 (APKAAKVSTDDEAAAPAEEAPAAE) is disordered. A compositionally biased stretch (low complexity) spans 201–211 (AAPAEEAPAAE).

The protein belongs to the bacterial ribosomal protein bL25 family. CTC subfamily. As to quaternary structure, part of the 50S ribosomal subunit; part of the 5S rRNA/L5/L18/L25 subcomplex. Contacts the 5S rRNA. Binds to the 5S rRNA independently of L5 and L18.

Functionally, this is one of the proteins that binds to the 5S RNA in the ribosome where it forms part of the central protuberance. The polypeptide is Large ribosomal subunit protein bL25 (Colwellia psychrerythraea (strain 34H / ATCC BAA-681) (Vibrio psychroerythus)).